Reading from the N-terminus, the 148-residue chain is EKC/KEOPS complex subunit Lage3 (148 aa).

A disordered region spans residues 1–21 (MQTAHTGLSHTADGADGQTSR).

Belongs to the CTAG/PCC1 family. Component of the EKC/KEOPS complex composed of at least GON7, TP53RK, TPRKB, OSGEP and LAGE3; the whole complex dimerizes.

The protein resides in the cytoplasm. It is found in the nucleus. Component of the EKC/KEOPS complex that is required for the formation of a threonylcarbamoyl group on adenosine at position 37 (t(6)A37) in tRNAs that read codons beginning with adenine. The complex is probably involved in the transfer of the threonylcarbamoyl moiety of threonylcarbamoyl-AMP (TC-AMP) to the N6 group of A37. LAGE3 functions as a dimerization module for the complex. The sequence is that of EKC/KEOPS complex subunit Lage3 from Mus musculus (Mouse).